We begin with the raw amino-acid sequence, 349 residues long: MRLFRCCAAAVVAAESLLWLKNGSPFFAFLPGNGEIADNCSGNPCGGTAAGTCINTPSGYDCRCEPGYVLGVENDQVTCMMPSGVPMANFVQLSETPAACSSNPCGPEAAGTCKETNSGYICRCNQGYRISLDGTGNVTCIVRQESGCEENGCGPPDAVQSCRRLTGTAGRLCVCKENFIATIDASAHITCKRVPPHYRKPPFEFGKGGHPVDSEPSKRQREDEGESREPESDSTEPGRDQERRTPLEESQEPEGSTPDSQQSRGGSGSDSTESEEQGKEREEGSGHAGAIAGGVIGGLLLLSAAGAGVAYMRKSGSGGGEEIEYERGIEAAEASEVEVLVDLDSKTWD.

Residues 1 to 23 (MRLFRCCAAAVVAAESLLWLKNG) form the signal peptide. EGF-like domains lie at 36–80 (IADN…VTCM), 96–134 (TPAA…SLDG), and 147–192 (GCEE…ITCK). 9 cysteine pairs are disulfide-bonded: Cys-40–Cys-53, Cys-45–Cys-62, Cys-64–Cys-79, Cys-100–Cys-113, Cys-105–Cys-122, Cys-124–Cys-140, Cys-148–Cys-162, Cys-153–Cys-173, and Cys-175–Cys-191. The tract at residues 194–291 (VPPHYRKPPF…EEGSGHAGAI (98 aa)) is disordered. The tract at residues 204–283 (EFGKGGHPVD…SEEQGKEREE (80 aa)) is acidic domain. Basic and acidic residues-rich tracts occupy residues 210 to 247 (HPVD…RTPL) and 276 to 285 (EQGKEREEGS). The helical transmembrane segment at 290–310 (AIAGGVIGGLLLLSAAGAGVA) threads the bilayer.

In terms of assembly, interacts directly with MIC1. Part of the MIC6-MIC1-MIC4 complex. Subject to proteolytic processing involving both the N-terminus and the C-terminus. The first EGF-like domain (EGF-like domain 1) is removed by proteolytic cleavage by ASP3 and is not present in the mature protein. Released as soluble 35 kDa protein after proteolytic processing at the C-terminus.

It is found in the cytoplasmic vesicle. Its subcellular location is the secretory vesicle. The protein localises to the microneme membrane. The protein resides in the secreted. Escorter protein required for import of MIC1 and MIC4 adhesins into the microneme. In Toxoplasma gondii, this protein is Micronemal protein 6.